We begin with the raw amino-acid sequence, 356 residues long: tRNA N6-adenosine threonylcarbamoyltransferase (356 aa).

Residues histidine 115 and histidine 119 each contribute to the Fe cation site. Residues 138-142, aspartate 171, glycine 184, and asparagine 283 contribute to the substrate site; that span reads LVSGG. Aspartate 311 is a Fe cation binding site.

It belongs to the KAE1 / TsaD family. Fe(2+) serves as cofactor.

The protein localises to the cytoplasm. It catalyses the reaction L-threonylcarbamoyladenylate + adenosine(37) in tRNA = N(6)-L-threonylcarbamoyladenosine(37) in tRNA + AMP + H(+). In terms of biological role, required for the formation of a threonylcarbamoyl group on adenosine at position 37 (t(6)A37) in tRNAs that read codons beginning with adenine. Is involved in the transfer of the threonylcarbamoyl moiety of threonylcarbamoyl-AMP (TC-AMP) to the N6 group of A37, together with TsaE and TsaB. TsaD likely plays a direct catalytic role in this reaction. In Prochlorococcus marinus (strain MIT 9515), this protein is tRNA N6-adenosine threonylcarbamoyltransferase.